A 120-amino-acid polypeptide reads, in one-letter code: NAD(P)H-quinone oxidoreductase subunit 3 (120 aa).

Helical transmembrane passes span 1–21, 64–84, and 89–109; these read MFVL…SLVP, MFAL…PWAV, and LGLL…VALV.

The protein belongs to the complex I subunit 3 family. As to quaternary structure, NDH-1 can be composed of about 15 different subunits; different subcomplexes with different compositions have been identified which probably have different functions.

It localises to the cellular thylakoid membrane. It carries out the reaction a plastoquinone + NADH + (n+1) H(+)(in) = a plastoquinol + NAD(+) + n H(+)(out). The catalysed reaction is a plastoquinone + NADPH + (n+1) H(+)(in) = a plastoquinol + NADP(+) + n H(+)(out). NDH-1 shuttles electrons from an unknown electron donor, via FMN and iron-sulfur (Fe-S) centers, to quinones in the respiratory and/or the photosynthetic chain. The immediate electron acceptor for the enzyme in this species is believed to be plastoquinone. Couples the redox reaction to proton translocation, and thus conserves the redox energy in a proton gradient. Cyanobacterial NDH-1 also plays a role in inorganic carbon-concentration. The sequence is that of NAD(P)H-quinone oxidoreductase subunit 3 from Trichormus variabilis (strain ATCC 29413 / PCC 7937) (Anabaena variabilis).